Here is a 258-residue protein sequence, read N- to C-terminus: Na(+)-translocating NADH-quinone reductase subunit C (258 aa).

The helical transmembrane segment at 14-34 threads the bilayer; the sequence is LIVVLAVSLICSVIVAGAVVG. At S226 the chain carries FMN phosphoryl serine.

The protein belongs to the NqrC family. As to quaternary structure, composed of six subunits; NqrA, NqrB, NqrC, NqrD, NqrE and NqrF. The cofactor is FMN.

It localises to the cell inner membrane. It catalyses the reaction a ubiquinone + n Na(+)(in) + NADH + H(+) = a ubiquinol + n Na(+)(out) + NAD(+). NQR complex catalyzes the reduction of ubiquinone-1 to ubiquinol by two successive reactions, coupled with the transport of Na(+) ions from the cytoplasm to the periplasm. NqrA to NqrE are probably involved in the second step, the conversion of ubisemiquinone to ubiquinol. The chain is Na(+)-translocating NADH-quinone reductase subunit C from Neisseria meningitidis serogroup B (strain ATCC BAA-335 / MC58).